The chain runs to 549 residues: Glucose-6-phosphate isomerase (549 aa).

Glu-355 acts as the Proton donor in catalysis. Active-site residues include His-386 and Lys-514.

The protein belongs to the GPI family.

It is found in the cytoplasm. It carries out the reaction alpha-D-glucose 6-phosphate = beta-D-fructose 6-phosphate. The protein operates within carbohydrate biosynthesis; gluconeogenesis. It functions in the pathway carbohydrate degradation; glycolysis; D-glyceraldehyde 3-phosphate and glycerone phosphate from D-glucose: step 2/4. Functionally, catalyzes the reversible isomerization of glucose-6-phosphate to fructose-6-phosphate. The chain is Glucose-6-phosphate isomerase from Sodalis glossinidius (strain morsitans).